The sequence spans 79 residues: D-alanyl carrier protein (79 aa).

Positions 1-76 (MKEQIFDIIE…KIAARVQEKK (76 aa)) constitute a Carrier domain. S34 is modified (O-(pantetheine 4'-phosphoryl)serine).

It belongs to the DltC family. 4'-phosphopantetheine is transferred from CoA to a specific serine of apo-DCP.

The protein resides in the cytoplasm. Its pathway is cell wall biogenesis; lipoteichoic acid biosynthesis. Its function is as follows. Carrier protein involved in the D-alanylation of lipoteichoic acid (LTA). The loading of thioester-linked D-alanine onto DltC is catalyzed by D-alanine--D-alanyl carrier protein ligase DltA. The DltC-carried D-alanyl group is further transferred to cell membrane phosphatidylglycerol (PG) by forming an ester bond, probably catalyzed by DltD. D-alanylation of LTA plays an important role in modulating the properties of the cell wall in Gram-positive bacteria, influencing the net charge of the cell wall. This chain is D-alanyl carrier protein, found in Lactococcus lactis subsp. lactis (strain IL1403) (Streptococcus lactis).